The sequence spans 164 residues: HTH-type transcriptional regulator IscR (164 aa).

An HTH rrf2-type domain is found at 2-131 (RLTSKGRYAV…GSISLEELVK (130 aa)). The segment at residues 28 to 51 (LADISERQGISLSYLEQLFSRLRK) is a DNA-binding region (H-T-H motif). 3 residues coordinate [2Fe-2S] cluster: cysteine 92, cysteine 98, and cysteine 104. The segment at 140-164 (DRQDSDKRRTPNGRPQETINVNLRA) is disordered. The span at 152 to 164 (GRPQETINVNLRA) shows a compositional bias: polar residues.

Requires [2Fe-2S] cluster as cofactor.

Regulates the transcription of several operons and genes involved in the biogenesis of Fe-S clusters and Fe-S-containing proteins. This Xenorhabdus nematophila (strain ATCC 19061 / DSM 3370 / CCUG 14189 / LMG 1036 / NCIMB 9965 / AN6) protein is HTH-type transcriptional regulator IscR.